Consider the following 205-residue polypeptide: Urease accessory protein UreG (205 aa).

A GTP-binding site is contributed by 11 to 18 (GPVGSGKT).

The protein belongs to the SIMIBI class G3E GTPase family. UreG subfamily. As to quaternary structure, homodimer. UreD, UreF and UreG form a complex that acts as a GTP-hydrolysis-dependent molecular chaperone, activating the urease apoprotein by helping to assemble the nickel containing metallocenter of UreC. The UreE protein probably delivers the nickel.

Its subcellular location is the cytoplasm. Functionally, facilitates the functional incorporation of the urease nickel metallocenter. This process requires GTP hydrolysis, probably effectuated by UreG. This chain is Urease accessory protein UreG, found in Prochlorococcus marinus (strain NATL1A).